The primary structure comprises 84 residues: UPF0512 protein O (84 aa).

It belongs to the UPF0512 family.

The chain is UPF0512 protein O from Dictyostelium discoideum (Social amoeba).